The chain runs to 471 residues: E3 SUMO-protein ligase EGR2 (471 aa).

Low complexity predominate over residues 127–143 (PASTTASSNVTSASPNP). Positions 127–177 (PASTTASSNVTSASPNPLATGPLGVCTMSQTQPDLDHLYSPPPPPPYSGCA) are disordered. The residue at position 246 (lysine 246) is an N6-acetyllysine; by EP300. Disordered regions lie at residues 273-301 (GGPSAGTTGPGASGGSEGPRLPGSSAAAA) and 313-336 (RPILRPRKYPNRPSKTPVHERPYP). Gly residues predominate over residues 280-289 (TGPGASGGSE). 3 consecutive C2H2-type zinc fingers follow at residues 335 to 359 (YPCPAEGCDRRFSRSDELTRHIRIH), 365 to 387 (FQCRICMRNFSRSDHLTTHIRTH), and 393 to 415 (FACDYCGRKFARSDERKRHTKIH). Positions 406–471 (DERKRHTKIH…GPCSSRTRTP (66 aa)) are disordered. The segment covering 410 to 420 (RHTKIHLRQKE) has biased composition (basic residues). Low complexity predominate over residues 424-437 (SAPSSSVPAASTAS).

This sequence belongs to the EGR C2H2-type zinc-finger protein family. As to quaternary structure, interacts with HCFC1. Interacts with WWP2. Interacts with UBC9. Interacts with CITED1. Interacts (via phosphorylated form) with SFN. In terms of processing, ubiquitinated by WWP2 leading to proteasomal degradation. Acetylated at Lys-246. May be deacetylated by HDAC6, HDAC10 or SIRT1.

It localises to the nucleus. It participates in protein modification; protein sumoylation. In terms of biological role, sequence-specific DNA-binding transcription factor. Plays a role in hindbrain segmentation by regulating the expression of a subset of homeobox containing genes and in Schwann cell myelination by regulating the expression of genes involved in the formation and maintenance of myelin. Binds to two EGR2-consensus sites EGR2A (5'-CTGTAGGAG-3') and EGR2B (5'-ATGTAGGTG-3') in the HOXB3 enhancer and promotes HOXB3 transcriptional activation. Binds to specific DNA sites located in the promoter region of HOXA4, HOXB2 and ERBB2. Regulates hindbrain segmentation by controlling the expression of Hox genes, such as HOXA4, HOXB3 and HOXB2, and thereby specifying odd and even rhombomeres. Promotes the expression of HOXB3 in the rhombomere r5 in the hindbrain. Regulates myelination in the peripheral nervous system after birth, possibly by regulating the expression of myelin proteins, such as MPZ, and by promoting the differentiation of Schwann cells. Involved in the development of the jaw openener musculature, probably by playing a role in its innervation through trigeminal motor neurons. May play a role in adipogenesis, possibly by regulating the expression of CEBPB. E3 SUMO-protein ligase helping SUMO1 conjugation to its coregulators NAB1 and NAB2, whose sumoylation down-regulates EGR2 transcriptional activity. The sequence is that of E3 SUMO-protein ligase EGR2 (EGR2) from Sus scrofa (Pig).